The sequence spans 192 residues: uncharacterized protein (192 aa).

The Nudix hydrolase domain occupies 29–160 (QRQAAVLIPV…PLDVYRRGNS (132 aa)). The Nudix box motif lies at 67 to 89 (GAVDSTDASLIAAALREAQEEVA). Residues Glu83 and Glu87 each contribute to the Mg(2+) site.

The protein belongs to the Nudix hydrolase family. PCD1 subfamily. It depends on Mn(2+) as a cofactor. Mg(2+) serves as cofactor.

In terms of biological role, probably mediates the hydrolysis of some nucleoside diphosphate derivatives. This is an uncharacterized protein from Salmonella dublin (strain CT_02021853).